Reading from the N-terminus, the 284-residue chain is Elongation factor Ts (284 aa).

Positions 80–83 (TDFV) are involved in Mg(2+) ion dislocation from EF-Tu.

It belongs to the EF-Ts family.

It localises to the cytoplasm. Its function is as follows. Associates with the EF-Tu.GDP complex and induces the exchange of GDP to GTP. It remains bound to the aminoacyl-tRNA.EF-Tu.GTP complex up to the GTP hydrolysis stage on the ribosome. The polypeptide is Elongation factor Ts (Neisseria gonorrhoeae (strain ATCC 700825 / FA 1090)).